We begin with the raw amino-acid sequence, 154 residues long: Protein X (154 aa).

The segment at 68–117 is mitochondrial targeting sequence; it reads PCALRFTSARRMETTVNAHRNLPKVLHKRTLGLSAMSTTDLEAHFKDCVF.

Belongs to the orthohepadnavirus protein X family. As to quaternary structure, may form homodimer. May interact with host CEBPA, CFLAR, CREB1, DDB1, E4F1, HBXIP, HSPD1/HSP60, NFKBIA, POLR2E and SMAD4. Interacts with host SMC5-SMC6 complex and induces its degradation. Interacts with host TRPC4AP; leading to prevent ubiquitination of TRPC4AP. Interacts with host PLSCR1; this interaction promotes ubiquitination and degradation of HBx and impairs HBx-mediated cell proliferation. A fraction may be phosphorylated in insect cells and HepG2 cells, a human hepatoblastoma cell line. Phosphorylated in vitro by host protein kinase C or mitogen-activated protein kinase. N-acetylated in insect cells.

The protein localises to the host cytoplasm. It is found in the host nucleus. It localises to the host mitochondrion. Functionally, multifunctional protein that plays a role in silencing host antiviral defenses and promoting viral transcription. Does not seem to be essential for HBV infection. May be directly involved in development of cirrhosis and liver cancer (hepatocellular carcinoma). Most of cytosolic activities involve modulation of cytosolic calcium. The effect on apoptosis is controversial depending on the cell types in which the studies have been conducted. May induce apoptosis by localizing in mitochondria and causing loss of mitochondrial membrane potential. May also modulate apoptosis by binding host CFLAR, a key regulator of the death-inducing signaling complex (DISC). Promotes viral transcription by using the host E3 ubiquitin ligase DDB1 to target the SMC5-SMC6 complex to proteasomal degradation. This host complex would otherwise bind to viral episomal DNA, and prevents its transcription. Moderately stimulates transcription of many different viral and cellular transcription elements. Promoters and enhancers stimulated by HBx contain DNA binding sites for NF-kappa-B, AP-1, AP-2, c-EBP, ATF/CREB, or the calcium-activated factor NF-AT. The protein is Protein X of Hepatitis B virus genotype B2 (isolate Indonesia/pIDW420/1988) (HBV-B).